A 428-amino-acid chain; its full sequence is uncharacterized protein (428 aa).

10 consecutive transmembrane segments (helical) span residues 26-46, 51-71, 90-110, 135-155, 177-197, 223-243, 278-298, 314-334, 359-379, and 407-427; these read VALT…DDVF, AGID…VSVL, AAPL…SALL, TPFL…TLVG, MAPA…WLLG, LLIK…AHPV, TLLF…TGVV, LLTV…IDNI, TFWW…AVAA, and VVTA…YFVF.

The protein belongs to the CitM (TC 2.A.11) transporter family.

It is found in the cell membrane. This is an uncharacterized protein from Mycobacterium tuberculosis (strain CDC 1551 / Oshkosh).